The following is a 554-amino-acid chain: uncharacterized protein (554 aa).

Disordered regions lie at residues 1-127 (MTTH…NYND), 139-173 (IEDD…SKAG), 293-395 (NNNN…PLSE), and 416-509 (FGFS…RKIR). 3 stretches are compositionally biased toward low complexity: residues 9-30 (SSSN…NNNI), 46-55 (DPTSSSSPTN), and 63-125 (SNSN…LINY). The segment covering 139-153 (IEDDEEYEEIGDEES) has biased composition (acidic residues). The segment covering 164 to 173 (NDSLNGSKAG) has biased composition (polar residues). Composition is skewed to low complexity over residues 293–387 (NNNN…CSSN), 416–449 (FGFS…SSIS), and 461–484 (SPPL…NNNH). Over residues 485 to 508 (HNNHHQNHHHQNHNHQHHSKKRKI) the composition is skewed to basic residues.

This is an uncharacterized protein from Dictyostelium discoideum (Social amoeba).